We begin with the raw amino-acid sequence, 452 residues long: Disintegrin and metalloproteinase domain-containing protein 11 (452 aa).

Positions 1 to 120 (RRHHSPLLVS…GGGSCLFNKP (120 aa)) constitute a Peptidase M12B domain. Residues 1 to 417 (RRHHSPLLVS…EKYKGPSGTN (417 aa)) are Extracellular-facing. Intrachain disulfides connect cysteine 31/cysteine 115, cysteine 74/cysteine 99, and cysteine 76/cysteine 83. The Disintegrin domain maps to 126-214 (PPSCGNGFIE…ACPANLHKQD (89 aa)). Asparagine 149 is a glycosylation site (N-linked (GlcNAc...) asparagine). A disulfide bond links cysteine 186 and cysteine 206. Residues asparagine 288 and asparagine 356 are each glycosylated (N-linked (GlcNAc...) asparagine). 3 disulfide bridges follow: cysteine 360/cysteine 375, cysteine 369/cysteine 381, and cysteine 383/cysteine 392. Positions 360-416 (CPGSWNGVICSDHGVCSNEGKCICHPEWTGKDCSVYDPLPVPKPTGVVEKYKGPSGT) constitute an EGF-like domain. A helical membrane pass occupies residues 418 to 438 (IIIGSIAGAVLIAAIVLGGTG). Topologically, residues 439–452 (WGFKNIRRGRSGGG) are cytoplasmic.

Post-translationally, the precursor is cleaved by a furin endopeptidase. In terms of tissue distribution, detected in testis and barely expressed in heart and muscle. Not detectable in liver.

Its subcellular location is the presynaptic cell membrane. The protein resides in the perikaryon. The protein localises to the cell projection. It is found in the axon. Probable ligand for integrin in the brain. This is a non-catalytic metalloprotease-like protein. The polypeptide is Disintegrin and metalloproteinase domain-containing protein 11 (adam11) (Xenopus laevis (African clawed frog)).